The chain runs to 2176 residues: MFSSMWRLPLWTLLALHRIHSAGAQDDVPPYFKTEPVRTQVHLEGNRLVLTCMAEGSWPLEFKWLHNNRELTRFSLEYRYMITSLDRTHAGFYRCIVRNRMGALLQRQTEVQVAYMGSFEEGEKRQSVNHGEAAVIRAPRISSFPRPQVTWFRDGRKIPPSSRIAITLENTLVILSTVAPDAGRYYVQAVNDKNGDNKTSQPITLAVENVGGPADPIAPTIIIPPKNTSVVAGTSEVTMECVANARPLIKLHIVWKKDGAPLSSGISDYNRRLTIANPTVSDAGYYECEAMLRSSSVAPVTRGAYLSVLEPPQFVREPERHITAEMEKVVDIPCRAKGVPPPSITWYKDAALVEVGKLTRFKQRSDGGLQISGLLPDDTGMLQCFAHNAAGEAQTSTYLAVTSIAPNITRGPLDSTVIDGMSVVLACETSGAPRPAITWQKGERILASGSVQLPRFTLLESGSLLISPTHISDAGTYTCLATNSRGVDEASADLVVWARTRITKPPQDQSVIKGTQASMVCGVTHDPRVTVRYVWEKDGATLAVETNPRIRLDRNGSLHISQTWSGDIGTYTCRVLSAGGNDSRNAHLRVRQLPHAPEHPVATLSTVERRAINLTWAKPFDGNSPLMRYVLEMSENNAPWTILLASVDPEATSVMVKGLVPARSYQFRLCAVNDVGKGQFSKDTERVSLPEEPPTAPPQNVIASGRTNQSIMIQWQPPPESHQNGILKGYIIRYCLAGLPVGYQFKNITDADVNNLLLEDLIIWTNYEIEVAAYNSAGLGVYSSKVTEWTLQGVPTVPPGNVHAEATNSTTIRFTWNAPSPQFINGINQGYKLIAWEPAQEEEVTMVTARPNFQDSIHVGFVSGLKKFTEYFTSVLCFTTPGDGPRSSPQLVRTHEDVPGPVGHLSFNDILDTSLKVSWQEPGEKNGILTGYRISWEEYNRTNTRVTHYLPNVTLEYRVTGLTALTTYTIEVAAMTSKGQGQVSASTISSGVPPELPGAPTNLGISNIGPRSVTLQFRPGYDGKTSISRWVVEAQVGVIGEGEEWLLIYQLGNEPDARSMEVPDLNPFTYYSFRMRQVNIVGTSPPSQPSRKIQTLQAPPDIAPANVTLRTASETSLWLRWMPLPEMEYNGNPESVGYKIKYGRSDGHGKTLSHTVQDRVEREYTIEDLEEWTEYRVQVQAFNAIGSGPWSQAVVGRTRESVPSSGPTNVSALATTSSSMLVRWSEIPEADRNGLVLGYKVRYKEKDSDSQPRFWLVEGNSSRSAQLTGLGKYVLYEVQVLAFTRIGDGSPSHPPILERTLDDVPGPPMGILFPEVRTTSVRLIWQPPAAPNGIILAYQITHRLNATTANTATVEVLAPSARQYMATGLKPESVYLFRITAQTRKGWGEAAEALVVTTEKRDRPQPPSKPVVQQEDVKARSVLLSWEPGSDGLSPVRYYTIQTRELPSGRWALHSASVSHNASAFTVDRLKPFTSYKFRVKATNDIGDSEFSEESESLTTLQAAPDEAPTILSVTPHTTTSVLIRWQPPSEDKINGILLGFRIRYRELLYDGLRGFTLRGINNPGAKWAELTSLYSMRNLTRPSLTQYELDNLSKHRRYEIRMSIYNAVGEGPLSPPQEVFVGEAVPTAAPQNVAIHSATATQLDVTWEPPPLDNQNGDIQGYKIYFWEVQRRNLTERVKTLFLAENSVKLKNLTGYTAYMVSVAAFNAAGDGPRSTPTRGQTQQAAPSAPGSVKFSELTTTSVNVSWDAPQFPNGPLEGYRLVYEPCTPVDGVSKIVTVDVKGNSPLWLKVKDLAEGMTYRFRIKAKTFTYGPEIEANITTGPGEGAPGPPGVPIIVRYSSAIAIHWSSGDPGKGPITRYVIEARPSDEGLWDILIKDIPKEVTSYTFSMDILKPGVSYDFRVIAVNDYGFGTPSSPSQSVPAQKASPFYEEWWFLVVIALVGLIFILLLVFVLIIRGQSKKYSKKTDSGGNTKSGALGHGEMLSLDESSFPALELNNRRLSVKNSFCRKNGLYTRSPPRPSPGSLHYSDEDVTKYNDLIPAESSSLTEKPSEISDSQGSDSEYEVDTNTQKAHSFVNHYISDPTYYNSWRRQQKGISRAQAYSYTESDSGEPDHVTVPNSNSTQQGSLFRPKASRTPTPQNPPNPQSQQSTLYRPPSSLAPGSRAPIAGFSSFV.

Residues 1-24 form the signal peptide; that stretch reads MFSSMWRLPLWTLLALHRIHSAGA. Residues 25-1936 are Extracellular-facing; sequence QDDVPPYFKT…ASPFYEEWWF (1912 aa). 6 consecutive Ig-like C2-type domains span residues 30–112, 117–204, 219–298, 312–402, 406–495, and 500–589; these read PYFK…TEVQ, GSFE…QPIT, PTII…SSVA, PQFV…LAVT, PNIT…ADLV, and TRIT…AHLR. Cys52 and Cys95 are oxidised to a cystine. Asn197 carries N-linked (GlcNAc...) asparagine glycosylation. Disulfide bonds link Cys241–Cys288, Cys334–Cys384, Cys427–Cys479, and Cys521–Cys573. Fibronectin type-III domains follow at residues 596–692, 697–793, 798–897, 901–995, 999–1098, 1103–1201, 1206–1303, 1307–1401, 1406–1503, 1508–1625, 1630–1726, 1730–1825, and 1828–1930; these read APEH…LPEE, PPQN…TLQG, PPGN…THED, PVGH…VPPE, APTN…TLQA, APAN…TRES, GPTN…TLDD, PPMG…TEKR, PPSK…TLQA, APTI…VGEA, APQN…TQQA, APGS…TGPG, and APGP…ASPF. Asn747 carries an N-linked (GlcNAc...) asparagine glycan. Asn940 and Asn952 each carry an N-linked (GlcNAc...) asparagine glycan. Residue Asn1106 is glycosylated (N-linked (GlcNAc...) asparagine). An N-linked (GlcNAc...) asparagine glycan is attached at Asn1592. Residues 1712-1734 are disordered; it reads DGPRSTPTRGQTQQAAPSAPGSV. The segment covering 1716 to 1727 has biased composition (polar residues); that stretch reads STPTRGQTQQAA. Residues 1937–1957 form a helical membrane-spanning segment; sequence LVVIALVGLIFILLLVFVLII. At 1958–2176 the chain is on the cytoplasmic side; it reads RGQSKKYSKK…APIAGFSSFV (219 aa). Disordered regions lie at residues 2013-2032, 2043-2070, and 2102-2176; these read GLYTRSPPRPSPGSLHYSDE, AESSSLTEKPSEISDSQGSDSEYEVDTN, and QAYS…SSFV. Composition is skewed to polar residues over residues 2044–2070 and 2119–2129; these read ESSSLTEKPSEISDSQGSDSEYEVDTN and VPNSNSTQQGS. The PDZ-binding motif lies at 2170 to 2176; sequence AGFSSFV.

Belongs to the sidekick family. As to quaternary structure, homodimer; mediates homophilic interactions to promote cell adhesion. Interacts (via PDZ-binding motif) with MAGI1, MAGI2, DLG2, DLG3 and DLG4. In terms of tissue distribution, expressed in retinal ganglion cells (RGCs) that form synapses in distinct inner plexiform layer (IPL) sublaminae. Specifically expressed in specific subsets of retinal ganglion cells (RGCs), named W3B-RGCs, that specifically respond when the timing of the movement of a small object differs from that of the background, but not when they coincide (at protein level). Also present in excitatory amacrine cell type called VG3-ACs, that provide strong and selective input W3B-RGCs (at protein level). Expressed at low levels in the glomeruli.

It localises to the cell membrane. The protein resides in the synapse. In terms of biological role, adhesion molecule that promotes lamina-specific synaptic connections in the retina and is specifically required for the formation of neuronal circuits that detect motion. Acts by promoting formation of synapses between two specific retinal cell types: the retinal ganglion cells W3B-RGCs and the excitatory amacrine cells VG3-ACs. Formation of synapses between these two cells plays a key role in detection of motion. Promotes synaptic connectivity via homophilic interactions. This chain is Protein sidekick-2, found in Mus musculus (Mouse).